The following is a 397-amino-acid chain: Arginine biosynthesis bifunctional protein ArgJ (397 aa).

Substrate is bound by residues threonine 147, lysine 173, threonine 184, glutamate 270, asparagine 392, and threonine 397. Threonine 184 (nucleophile) is an active-site residue.

This sequence belongs to the ArgJ family. Heterotetramer of two alpha and two beta chains.

The protein localises to the cytoplasm. The enzyme catalyses N(2)-acetyl-L-ornithine + L-glutamate = N-acetyl-L-glutamate + L-ornithine. It carries out the reaction L-glutamate + acetyl-CoA = N-acetyl-L-glutamate + CoA + H(+). It participates in amino-acid biosynthesis; L-arginine biosynthesis; L-ornithine and N-acetyl-L-glutamate from L-glutamate and N(2)-acetyl-L-ornithine (cyclic): step 1/1. Its pathway is amino-acid biosynthesis; L-arginine biosynthesis; N(2)-acetyl-L-ornithine from L-glutamate: step 1/4. Its function is as follows. Catalyzes two activities which are involved in the cyclic version of arginine biosynthesis: the synthesis of N-acetylglutamate from glutamate and acetyl-CoA as the acetyl donor, and of ornithine by transacetylation between N(2)-acetylornithine and glutamate. This is Arginine biosynthesis bifunctional protein ArgJ from Streptococcus thermophilus (strain ATCC BAA-250 / LMG 18311).